The primary structure comprises 177 residues: Large ribosomal subunit protein uL6 (177 aa).

The protein belongs to the universal ribosomal protein uL6 family. As to quaternary structure, part of the 50S ribosomal subunit.

In terms of biological role, this protein binds to the 23S rRNA, and is important in its secondary structure. It is located near the subunit interface in the base of the L7/L12 stalk, and near the tRNA binding site of the peptidyltransferase center. This chain is Large ribosomal subunit protein uL6, found in Chelativorans sp. (strain BNC1).